A 155-amino-acid chain; its full sequence is Cytochrome c-type biogenesis protein CcmE (155 aa).

The Cytoplasmic portion of the chain corresponds to 1 to 8 (MNPVRKRR). The chain crosses the membrane as a helical; Signal-anchor for type II membrane protein span at residues 9 to 29 (LFIVLAILAGVGAAVALALSA). Residues 30-155 (LQQNINLFYT…YENGKPGGAQ (126 aa)) lie on the Periplasmic side of the membrane. Residues H124 and Y128 each coordinate heme.

This sequence belongs to the CcmE/CycJ family.

It is found in the cell inner membrane. Its function is as follows. Heme chaperone required for the biogenesis of c-type cytochromes. Transiently binds heme delivered by CcmC and transfers the heme to apo-cytochromes in a process facilitated by CcmF and CcmH. This is Cytochrome c-type biogenesis protein CcmE from Azotobacter vinelandii (strain DJ / ATCC BAA-1303).